Consider the following 202-residue polypeptide: Imidazoleglycerol-phosphate dehydratase (202 aa).

It belongs to the imidazoleglycerol-phosphate dehydratase family.

The protein localises to the cytoplasm. The enzyme catalyses D-erythro-1-(imidazol-4-yl)glycerol 3-phosphate = 3-(imidazol-4-yl)-2-oxopropyl phosphate + H2O. Its pathway is amino-acid biosynthesis; L-histidine biosynthesis; L-histidine from 5-phospho-alpha-D-ribose 1-diphosphate: step 6/9. In Nocardioides sp. (strain ATCC BAA-499 / JS614), this protein is Imidazoleglycerol-phosphate dehydratase.